We begin with the raw amino-acid sequence, 385 residues long: tRNA-specific 2-thiouridylase MnmA (385 aa).

ATP-binding positions include 29–36 (GLSGGVDS) and Leu55. Cys116 acts as the Nucleophile in catalysis. A disulfide bridge connects residues Cys116 and Cys225. Gly141 contacts ATP. The interaction with tRNA stretch occupies residues 175-177 (KDQ). Catalysis depends on Cys225, which acts as the Cysteine persulfide intermediate. Residues 330 to 331 (RY) form an interaction with tRNA region.

The protein belongs to the MnmA/TRMU family.

Its subcellular location is the cytoplasm. It catalyses the reaction S-sulfanyl-L-cysteinyl-[protein] + uridine(34) in tRNA + AH2 + ATP = 2-thiouridine(34) in tRNA + L-cysteinyl-[protein] + A + AMP + diphosphate + H(+). Catalyzes the 2-thiolation of uridine at the wobble position (U34) of tRNA, leading to the formation of s(2)U34. The chain is tRNA-specific 2-thiouridylase MnmA from Prochlorococcus marinus (strain MIT 9301).